A 107-amino-acid polypeptide reads, in one-letter code: MTTETLACTYAALMLSDAGLPTSAENIAAAVKAAGVSVRPTMPIIFARFLEKKSVEALMAAAATQAPTATSAAAAPAAGEASGKAEEKKKEEPEEEGDDDMGFGLFD.

Residues 67–82 (PTATSAAAAPAAGEAS) show a composition bias toward low complexity. A disordered region spans residues 67 to 107 (PTATSAAAAPAAGEASGKAEEKKKEEPEEEGDDDMGFGLFD). The segment covering 83–92 (GKAEEKKKEE) has biased composition (basic and acidic residues).

This sequence belongs to the eukaryotic ribosomal protein P1/P2 family. P1 and P2 exist as dimers at the large ribosomal subunit.

Functionally, plays an important role in the elongation step of protein synthesis. In Leishmania peruviana, this protein is Large ribosomal subunit protein P1.